The following is a 1499-amino-acid chain: Rap guanine nucleotide exchange factor 2 (1499 aa).

Disordered stretches follow at residues 40–59 (HVSS…SSSL) and 68–101 (SEAG…SDPL). Residues 83–94 (VDSEDDDDEEDI) are compositionally biased toward acidic residues. Residue 135–254 (AFANMTMSVR…VEEEGEIVMV (120 aa)) coordinates a nucleoside 3',5'-cyclic phosphate. Residues 267–380 (KGHIVIKGTS…RLLNIACAAK (114 aa)) enclose the N-terminal Ras-GEF domain. The 86-residue stretch at 385–470 (LMTLTKPSRE…ITVKTNLFVF (86 aa)) folds into the PDZ domain. Phosphoserine is present on Ser501. Positions 606–692 (PDQVLRVFKA…GRYYLKNNME (87 aa)) constitute a Ras-associating domain. Phosphothreonine; by PLK2 is present on Thr644. The Ras-GEF domain occupies 717–944 (STVEVATQLS…SQGSTNATVL (228 aa)). Residue Ser806 is modified to Phosphoserine; by PLK2. Position 930 is a phosphoserine (Ser930). Phosphoserine; by PLK2 is present on Ser933. Positions 1002–1050 (PATNTLPKNPGDKKPVKSETSPVAPRAGSQQKAQSLPQPQQQPPPAHKI) are disordered. Ser1022 bears the Phosphoserine mark. Over residues 1031 to 1040 (QQKAQSLPQP) the composition is skewed to low complexity. Residues Ser1080, Ser1089, Ser1095, Ser1116, Ser1120, and Ser1159 each carry the phosphoserine modification. A disordered region spans residues 1095-1160 (SLERHKKQAE…RSSIVSNSSF (66 aa)). Low complexity-rich tracts occupy residues 1111-1125 (SSQL…QSSP) and 1141-1160 (SDSG…NSSF). Ser1176 is modified (phosphoserine; by PLK2). Disordered stretches follow at residues 1224 to 1256 (PSTE…SSGS) and 1305 to 1499 (TKYN…VSAV). 2 stretches are compositionally biased toward polar residues: residues 1247–1256 (GSWTSCSSGS) and 1307–1331 (YNRQ…SSTG). Residues 1355-1366 (EAESSSLTSVTT) are compositionally biased toward low complexity. Polar residues predominate over residues 1441–1462 (SSDTAGPSSVQQPHGHPTSSRP). The span at 1488–1499 (TEEDEDEQVSAV) shows a compositional bias: acidic residues.

Belongs to the RAPGEF2 family. Interacts with CDH1, CTNNB1 and TJP1. Interacts (via C-terminal domain) with MAGI2 (via PDZ and WW domains); the interaction occurs before or after NGF stimulation. Interacts with KIDINS220 and NTRK1; the interactions occur after NGF stimulation. Found in a complex, at least composed of KIDINS220, MAGI2, NTRK1 and RAPGEF2; the complex is mainly formed at late endosomes in a neuronal growth factor (NGF)-dependent manner. Interacts (via C-terminal domain) with NEDD4 (via WW domains); this interaction leads to ubiquitination and degradation via the proteasome pathway in a cAMP-independent manner. Interacts with MAGI1 isoform 3 (via PDZ domain). Interacts with ADRB1 (via C-terminal PDZ motif); the interaction is direct. Interacts (via Ras-associating domain) with RAP1A (via GTP-bound active form). Interacts weakly with HRAS (via GDP- and GTP-bound forms). Interacts (via C-terminal domain) with MAGI2 (via PDZ and WW domains). Post-translationally, ubiquitinated by NEDD4, leading to proteasomal degradation. In terms of processing, phosphorylation by PLK2 promotes its activity. As to expression, expressed in primary neuronal and endocrine cells (at protein level). Highest expression levels in brain. Lower expression levels in heart, kidney, lung, placenta and blood leukocytes.

The protein resides in the cytoplasm. It localises to the perinuclear region. Its subcellular location is the cell membrane. It is found in the late endosome. The protein localises to the cell junction. Functionally, functions as a guanine nucleotide exchange factor (GEF), which activates Rap and Ras family of small GTPases by exchanging bound GDP for free GTP in a cAMP-dependent manner. Serves as a link between cell surface receptors and Rap/Ras GTPases in intracellular signaling cascades. Also acts as an effector for Rap1 by direct association with Rap1-GTP thereby leading to the amplification of Rap1-mediated signaling. Shows weak activity on HRAS. It is controversial whether RAPGEF2 binds cAMP and cGMP or not. Its binding to ligand-activated beta-1 adrenergic receptor ADRB1 leads to the Ras activation through the G(s)-alpha signaling pathway. Involved in the cAMP-induced Ras and Erk1/2 signaling pathway that leads to sustained inhibition of long term melanogenesis by reducing dendrite extension and melanin synthesis. Also provides inhibitory signals for cell proliferation of melanoma cells and promotes their apoptosis in a cAMP-independent nanner. Regulates cAMP-induced neuritogenesis by mediating the Rap1/B-Raf/ERK signaling through a pathway that is independent on both PKA and RAPGEF3/RAPGEF4. Involved in neuron migration and in the formation of the major forebrain fiber connections forming the corpus callosum, the anterior commissure and the hippocampal commissure during brain development. Involved in neuronal growth factor (NGF)-induced sustained activation of Rap1 at late endosomes and in brain-derived neurotrophic factor (BDNF)-induced axon outgrowth of hippocampal neurons. Plays a role in the regulation of embryonic blood vessel formation and in the establishment of basal junction integrity and endothelial barrier function. May be involved in the regulation of the vascular endothelial growth factor receptor KDR and cadherin CDH5 expression at allantois endothelial cell-cell junctions. The chain is Rap guanine nucleotide exchange factor 2 (RAPGEF2) from Homo sapiens (Human).